A 274-amino-acid chain; its full sequence is Probable glycerophosphodiester phosphodiesterase 1 (274 aa).

One can recognise a GP-PDE domain in the interval 12-264 (PFVVAHRGAS…HHPGRTKAWL (253 aa)). His17 acts as the Proton acceptor in catalysis. The Ca(2+) site is built by Glu44 and Asp46. His59 acts as the Proton donor in catalysis. Glu126 is a binding site for Ca(2+).

This sequence belongs to the glycerophosphoryl diester phosphodiesterase family. Ca(2+) is required as a cofactor.

It catalyses the reaction a sn-glycero-3-phosphodiester + H2O = an alcohol + sn-glycerol 3-phosphate + H(+). Its function is as follows. Glycerophosphodiester phosphodiesterase hydrolyzes glycerophosphodiesters into glycerol-3-phosphate (G3P) and the corresponding alcohol. This Mycobacterium tuberculosis (strain CDC 1551 / Oshkosh) protein is Probable glycerophosphodiester phosphodiesterase 1 (glpQ1).